The sequence spans 90 residues: Probable Fe(2+)-trafficking protein (90 aa).

Belongs to the Fe(2+)-trafficking protein family.

Functionally, could be a mediator in iron transactions between iron acquisition and iron-requiring processes, such as synthesis and/or repair of Fe-S clusters in biosynthetic enzymes. This Hydrogenovibrio crunogenus (strain DSM 25203 / XCL-2) (Thiomicrospira crunogena) protein is Probable Fe(2+)-trafficking protein.